Reading from the N-terminus, the 156-residue chain is Jun dimerization protein 2 (156 aa).

The tract at residues 56–95 (KRPFDAIKSEDDDDDERKKRRREKNKVAAARCRNRKKERT) is disordered. Positions 70–133 (DERKKRRREK…QQLIVMLNLH (64 aa)) constitute a bZIP domain. The basic motif stretch occupies residues 72–94 (RKKRRREKNKVAAARCRNRKKER). The tract at residues 98-126 (LQKESERLEMLNSDLKSQIEELKSERQQL) is leucine-zipper.

Belongs to the bZIP family. ATF subfamily.

It is found in the nucleus. Component of the AP-1 transcription factor that represses transactivation mediated by the Jun family of proteins. In Danio rerio (Zebrafish), this protein is Jun dimerization protein 2 (jdp2).